Here is a 121-residue protein sequence, read N- to C-terminus: Large ribosomal subunit protein uL18 (121 aa).

This sequence belongs to the universal ribosomal protein uL18 family. As to quaternary structure, part of the 50S ribosomal subunit; part of the 5S rRNA/L5/L18/L25 subcomplex. Contacts the 5S and 23S rRNAs.

This is one of the proteins that bind and probably mediate the attachment of the 5S RNA into the large ribosomal subunit, where it forms part of the central protuberance. The chain is Large ribosomal subunit protein uL18 from Geobacter metallireducens (strain ATCC 53774 / DSM 7210 / GS-15).